The following is an 80-amino-acid chain: Defensin-like protein 204 (80 aa).

A signal peptide spans 1–29 (MAKTFSSICFTTLLLVVLFISTEIPKSEA). 3 disulfides stabilise this stretch: Cys-43/Cys-64, Cys-48/Cys-73, and Cys-52/Cys-75.

Belongs to the DEFL family.

It is found in the secreted. This chain is Defensin-like protein 204, found in Arabidopsis thaliana (Mouse-ear cress).